A 775-amino-acid polypeptide reads, in one-letter code: Kojibiose phosphorylase (775 aa).

361–362 (WD) serves as a coordination point for substrate. Glu-501 functions as the Proton donor in the catalytic mechanism. 614–615 (KQ) lines the substrate pocket.

It belongs to the glycosyl hydrolase 65 family. As to quaternary structure, homohexamer.

The catalysed reaction is kojibiose + phosphate = beta-D-glucose 1-phosphate + D-glucose. Inhibited by Hg(2+) and Pb(2+). Functionally, catalyzes the reversible phosphorolysis of kojibiose into beta-D-glucose 1-phosphate (Glc1P) and D-glucose. Can act with alpha-1,2-oligoglucans, such as selaginose, but more slowly. Inactive when disaccharides with linkages other than alpha-1,2 linkages, such as sophorose, trehalose, neotrehalose, nigerose, laminaribiose, maltose, cellobiose, isomaltose, gentiobiose, sucrose and lactose, are used as substrates. In contrast, shows broad specificity for the reverse reaction. Various monosaccharides and disaccharides having a glucosyl residue at the non-reducing end are effective acceptors. The chain is Kojibiose phosphorylase from Thermoanaerobacter brockii (Thermoanaerobium brockii).